Here is a 404-residue protein sequence, read N- to C-terminus: Cysteine desulfurase IscS (404 aa).

Pyridoxal 5'-phosphate contacts are provided by residues 75 to 76 (AT), Asn155, Gln183, and 203 to 205 (SGH). Lys206 bears the N6-(pyridoxal phosphate)lysine mark. Thr243 serves as a coordination point for pyridoxal 5'-phosphate. The Cysteine persulfide intermediate role is filled by Cys328. Cys328 serves as a coordination point for [2Fe-2S] cluster.

It belongs to the class-V pyridoxal-phosphate-dependent aminotransferase family. NifS/IscS subfamily. In terms of assembly, homodimer. Forms a heterotetramer with IscU, interacts with other sulfur acceptors. The cofactor is pyridoxal 5'-phosphate.

It is found in the cytoplasm. The enzyme catalyses (sulfur carrier)-H + L-cysteine = (sulfur carrier)-SH + L-alanine. Its pathway is cofactor biosynthesis; iron-sulfur cluster biosynthesis. In terms of biological role, master enzyme that delivers sulfur to a number of partners involved in Fe-S cluster assembly, tRNA modification or cofactor biosynthesis. Catalyzes the removal of elemental sulfur atoms from cysteine to produce alanine. Functions as a sulfur delivery protein for Fe-S cluster synthesis onto IscU, an Fe-S scaffold assembly protein, as well as other S acceptor proteins. In Klebsiella pneumoniae subsp. pneumoniae (strain ATCC 700721 / MGH 78578), this protein is Cysteine desulfurase IscS.